The following is a 641-amino-acid chain: Chaperone protein DnaK (641 aa).

Residue T198 is modified to Phosphothreonine; by autocatalysis. Basic and acidic residues-rich tracts occupy residues 514 to 529 (AEAN…EGVE), 540 to 554 (SSEK…KVSE), and 608 to 621 (AHAD…RSGD). 2 disordered regions span residues 514–554 (AEAN…KVSE) and 604–641 (QTES…KRSA). Over residues 622–633 (DVVDADYEEVKD) the composition is skewed to acidic residues.

Belongs to the heat shock protein 70 family.

Its function is as follows. Acts as a chaperone. The sequence is that of Chaperone protein DnaK from Sinorhizobium medicae (strain WSM419) (Ensifer medicae).